A 486-amino-acid chain; its full sequence is Palmitoleoyl-protein carboxylesterase notum2 (486 aa).

The signal sequence occupies residues 1–18 (MRILEIFAILLILKEVRP). N-linked (GlcNAc...) asparagine glycosylation occurs at asparagine 183. Active-site charge relay system residues include serine 223, aspartate 331, and histidine 380.

It belongs to the pectinacetylesterase family. Notum subfamily.

The protein localises to the secreted. It catalyses the reaction [Wnt protein]-O-(9Z)-hexadecenoyl-L-serine + H2O = [Wnt protein]-L-serine + (9Z)-hexadecenoate + H(+). Carboxylesterase that acts as a key negative regulator of the Wnt signaling pathway by specifically mediating depalmitoleoylation of WNT proteins. Serine palmitoleoylation of WNT proteins is required for efficient binding to frizzled receptors. This Xenopus laevis (African clawed frog) protein is Palmitoleoyl-protein carboxylesterase notum2.